The primary structure comprises 517 residues: NAD(P)H-quinone oxidoreductase subunit 2 (517 aa).

14 helical membrane passes run 16–36 (ILPE…DLIF), 43–63 (WLPY…YLAW), 80–100 (LSIV…LMSI), 110–130 (LAEF…LCGA), 133–153 (LVMI…MTGY), 168–188 (LLIG…LYGL), 211–231 (LGLA…ISAV), 245–265 (PTPV…ALAI), 279–299 (WHFV…VVAL), 307–327 (MLAY…VAGT), 335–355 (VFYL…IILF), 379–399 (LALS…GFFG), 401–421 (IYLF…LGLV), and 467–487 (VGIV…NPLF).

This sequence belongs to the complex I subunit 2 family. In terms of assembly, NDH-1 can be composed of about 15 different subunits; different subcomplexes with different compositions have been identified which probably have different functions.

It is found in the cellular thylakoid membrane. It catalyses the reaction a plastoquinone + NADH + (n+1) H(+)(in) = a plastoquinol + NAD(+) + n H(+)(out). The enzyme catalyses a plastoquinone + NADPH + (n+1) H(+)(in) = a plastoquinol + NADP(+) + n H(+)(out). Functionally, NDH-1 shuttles electrons from an unknown electron donor, via FMN and iron-sulfur (Fe-S) centers, to quinones in the respiratory and/or the photosynthetic chain. The immediate electron acceptor for the enzyme in this species is believed to be plastoquinone. Couples the redox reaction to proton translocation, and thus conserves the redox energy in a proton gradient. Cyanobacterial NDH-1 also plays a role in inorganic carbon-concentration. The protein is NAD(P)H-quinone oxidoreductase subunit 2 of Rippkaea orientalis (strain PCC 8801 / RF-1) (Cyanothece sp. (strain PCC 8801)).